The primary structure comprises 410 residues: Phospho-N-acetylmuramoyl-pentapeptide-transferase (410 aa).

10 consecutive transmembrane segments (helical) span residues R27 to I47, T77 to M97, L99 to G119, L140 to N160, P213 to I233, G248 to S268, I288 to Y308, V312 to L332, F337 to V357, and V389 to F409.

It belongs to the glycosyltransferase 4 family. MraY subfamily. Mg(2+) serves as cofactor.

The protein localises to the cell inner membrane. The enzyme catalyses UDP-N-acetyl-alpha-D-muramoyl-L-alanyl-gamma-D-glutamyl-meso-2,6-diaminopimeloyl-D-alanyl-D-alanine + di-trans,octa-cis-undecaprenyl phosphate = di-trans,octa-cis-undecaprenyl diphospho-N-acetyl-alpha-D-muramoyl-L-alanyl-D-glutamyl-meso-2,6-diaminopimeloyl-D-alanyl-D-alanine + UMP. It functions in the pathway cell wall biogenesis; peptidoglycan biosynthesis. Its function is as follows. Catalyzes the initial step of the lipid cycle reactions in the biosynthesis of the cell wall peptidoglycan: transfers peptidoglycan precursor phospho-MurNAc-pentapeptide from UDP-MurNAc-pentapeptide onto the lipid carrier undecaprenyl phosphate, yielding undecaprenyl-pyrophosphoryl-MurNAc-pentapeptide, known as lipid I. This is Phospho-N-acetylmuramoyl-pentapeptide-transferase from Protochlamydia amoebophila (strain UWE25).